Consider the following 376-residue polypeptide: Chaperone protein DnaJ (376 aa).

The 66-residue stretch at Asp-5 to Gly-70 folds into the J domain. The CR-type zinc finger occupies Gly-136–Thr-214. Residues Cys-149, Cys-152, Cys-166, Cys-169, Cys-188, Cys-191, Cys-202, and Cys-205 each coordinate Zn(2+). CXXCXGXG motif repeat units lie at residues Cys-149 to Gly-156, Cys-166 to Gly-173, Cys-188 to Gly-195, and Cys-202 to Gly-209.

The protein belongs to the DnaJ family. Homodimer. Zn(2+) is required as a cofactor.

It localises to the cytoplasm. In terms of biological role, participates actively in the response to hyperosmotic and heat shock by preventing the aggregation of stress-denatured proteins and by disaggregating proteins, also in an autonomous, DnaK-independent fashion. Unfolded proteins bind initially to DnaJ; upon interaction with the DnaJ-bound protein, DnaK hydrolyzes its bound ATP, resulting in the formation of a stable complex. GrpE releases ADP from DnaK; ATP binding to DnaK triggers the release of the substrate protein, thus completing the reaction cycle. Several rounds of ATP-dependent interactions between DnaJ, DnaK and GrpE are required for fully efficient folding. Also involved, together with DnaK and GrpE, in the DNA replication of plasmids through activation of initiation proteins. This Burkholderia multivorans (strain ATCC 17616 / 249) protein is Chaperone protein DnaJ.